The primary structure comprises 290 residues: uncharacterized protein (290 aa).

The protein belongs to the UreD family.

It localises to the cytoplasm. It is found in the nucleus. Functionally, probably facilitates nickel incorporation. This is an uncharacterized protein from Schizosaccharomyces pombe (strain 972 / ATCC 24843) (Fission yeast).